A 931-amino-acid polypeptide reads, in one-letter code: Isoleucine--tRNA ligase (931 aa).

The short motif at 57-67 (PYANGNIHIGH) is the 'HIGH' region element. E555 lines the L-isoleucyl-5'-AMP pocket. Positions 596–600 (KMSKS) match the 'KMSKS' region motif. K599 contributes to the ATP binding site. Residues C890, C893, C910, and C913 each coordinate Zn(2+).

The protein belongs to the class-I aminoacyl-tRNA synthetase family. IleS type 1 subfamily. Monomer. Zn(2+) serves as cofactor.

The protein resides in the cytoplasm. It carries out the reaction tRNA(Ile) + L-isoleucine + ATP = L-isoleucyl-tRNA(Ile) + AMP + diphosphate. Its function is as follows. Catalyzes the attachment of isoleucine to tRNA(Ile). As IleRS can inadvertently accommodate and process structurally similar amino acids such as valine, to avoid such errors it has two additional distinct tRNA(Ile)-dependent editing activities. One activity is designated as 'pretransfer' editing and involves the hydrolysis of activated Val-AMP. The other activity is designated 'posttransfer' editing and involves deacylation of mischarged Val-tRNA(Ile). The polypeptide is Isoleucine--tRNA ligase (Limosilactobacillus reuteri subsp. reuteri (strain JCM 1112) (Lactobacillus reuteri)).